Here is a 183-residue protein sequence, read N- to C-terminus: Inosine triphosphate pyrophosphatase (183 aa).

Threonine 8–lysine 13 lines the ITP pocket. Position 36 (glutamate 36) interacts with Mg(2+). ITP contacts are provided by residues lysine 48, aspartate 64–threonine 65, lysine 81, phenylalanine 140–aspartate 143, lysine 161, and histidine 166–arginine 167.

The protein belongs to the HAM1 NTPase family. As to quaternary structure, homodimer. Requires Mg(2+) as cofactor. Mn(2+) is required as a cofactor.

It localises to the cytoplasm. Its subcellular location is the nucleus. It carries out the reaction ITP + H2O = IMP + diphosphate + H(+). It catalyses the reaction dITP + H2O = dIMP + diphosphate + H(+). The enzyme catalyses XTP + H2O = XMP + diphosphate + H(+). Pyrophosphatase that hydrolyzes non-canonical purine nucleotides such as inosine triphosphate (ITP), deoxyinosine triphosphate (dITP) or xanthosine 5'-triphosphate (XTP) to their respective monophosphate derivatives. The enzyme does not distinguish between the deoxy- and ribose forms. Probably excludes non-canonical purines from RNA and DNA precursor pools, thus preventing their incorporation into RNA and DNA and avoiding chromosomal lesions. The polypeptide is Inosine triphosphate pyrophosphatase (Emericella nidulans (strain FGSC A4 / ATCC 38163 / CBS 112.46 / NRRL 194 / M139) (Aspergillus nidulans)).